Reading from the N-terminus, the 445-residue chain is Scarecrow-like protein 18 (445 aa).

Positions 1 to 21 are enriched in low complexity; the sequence is MLTSFKSSSSSSEDATATTTE. The interval 1–26 is disordered; it reads MLTSFKSSSSSSEDATATTTENPPPL. A GRAS domain is found at 32 to 445; that stretch reads SAATSASHHL…RPLFSVSSWK (414 aa). Positions 39 to 127 are leucine repeat I (LRI); it reads HHLRRLLFTA…STVFTSSVCK (89 aa). The segment at 146–217 is VHIID; it reads YLWLNQLTPF…SPPPSLRITG (72 aa). The VHIID motif lies at 179 to 183; the sequence is LHILD. The interval 227 to 259 is leucine repeat II (LRII); that stretch reads RTGDRLTRFADSLGLQFQFHTLVIVEEDLAGLL. The PFYRE stretch occupies residues 275 to 366; that stretch reads IAVNCVHFLH…QRWFGKEILD (92 aa). Residues 369-445 form an SAW region; the sequence is AAEETERKQR…RPLFSVSSWK (77 aa).

Belongs to the GRAS family. In terms of tissue distribution, expressed in roots and flowers.

The protein localises to the nucleus. Functionally, probable transcription factor required for axillary (lateral) shoot meristem formation during vegetative development. Seems to act upstream of REVOLUTA. The polypeptide is Scarecrow-like protein 18 (SCL18) (Arabidopsis thaliana (Mouse-ear cress)).